Consider the following 216-residue polypeptide: Pyridoxine/pyridoxamine 5'-phosphate oxidase (216 aa).

FMN is bound by residues 65–70, 80–81, arginine 86, lysine 87, and glutamine 109; these read RMVLLK and YT. Position 70 (lysine 70) interacts with substrate. The substrate site is built by tyrosine 127, arginine 131, and serine 135. Residues 144 to 145 and tryptophan 189 contribute to the FMN site; that span reads QS. 195 to 197 provides a ligand contact to substrate; sequence RLH. Arginine 199 contributes to the FMN binding site.

The protein belongs to the pyridoxamine 5'-phosphate oxidase family. As to quaternary structure, homodimer. Requires FMN as cofactor.

It carries out the reaction pyridoxamine 5'-phosphate + O2 + H2O = pyridoxal 5'-phosphate + H2O2 + NH4(+). The enzyme catalyses pyridoxine 5'-phosphate + O2 = pyridoxal 5'-phosphate + H2O2. It participates in cofactor metabolism; pyridoxal 5'-phosphate salvage; pyridoxal 5'-phosphate from pyridoxamine 5'-phosphate: step 1/1. The protein operates within cofactor metabolism; pyridoxal 5'-phosphate salvage; pyridoxal 5'-phosphate from pyridoxine 5'-phosphate: step 1/1. Catalyzes the oxidation of either pyridoxine 5'-phosphate (PNP) or pyridoxamine 5'-phosphate (PMP) into pyridoxal 5'-phosphate (PLP). The protein is Pyridoxine/pyridoxamine 5'-phosphate oxidase of Sphingopyxis alaskensis (strain DSM 13593 / LMG 18877 / RB2256) (Sphingomonas alaskensis).